A 132-amino-acid polypeptide reads, in one-letter code: Small ribosomal subunit protein uS8 (132 aa).

Belongs to the universal ribosomal protein uS8 family. In terms of assembly, part of the 30S ribosomal subunit. Contacts proteins S5 and S12.

Its function is as follows. One of the primary rRNA binding proteins, it binds directly to 16S rRNA central domain where it helps coordinate assembly of the platform of the 30S subunit. This Mesorhizobium japonicum (strain LMG 29417 / CECT 9101 / MAFF 303099) (Mesorhizobium loti (strain MAFF 303099)) protein is Small ribosomal subunit protein uS8.